Reading from the N-terminus, the 59-residue chain is UPF0391 membrane protein lpl2443 (59 aa).

2 helical membrane-spanning segments follow: residues 5–25 and 30–50; these read ALIF…GIAV and IAKI…IMGL.

The protein belongs to the UPF0391 family.

It localises to the cell membrane. This Legionella pneumophila (strain Lens) protein is UPF0391 membrane protein lpl2443.